The chain runs to 203 residues: ATP-dependent Clp protease proteolytic subunit (203 aa).

The Nucleophile role is filled by Ser100. Residue His125 is part of the active site.

This sequence belongs to the peptidase S14 family. In terms of assembly, fourteen ClpP subunits assemble into 2 heptameric rings which stack back to back to give a disk-like structure with a central cavity, resembling the structure of eukaryotic proteasomes.

The protein resides in the cytoplasm. It catalyses the reaction Hydrolysis of proteins to small peptides in the presence of ATP and magnesium. alpha-casein is the usual test substrate. In the absence of ATP, only oligopeptides shorter than five residues are hydrolyzed (such as succinyl-Leu-Tyr-|-NHMec, and Leu-Tyr-Leu-|-Tyr-Trp, in which cleavage of the -Tyr-|-Leu- and -Tyr-|-Trp bonds also occurs).. In terms of biological role, cleaves peptides in various proteins in a process that requires ATP hydrolysis. Has a chymotrypsin-like activity. Plays a major role in the degradation of misfolded proteins. This chain is ATP-dependent Clp protease proteolytic subunit, found in Anaeromyxobacter sp. (strain K).